We begin with the raw amino-acid sequence, 183 residues long: ATP synthase subunit delta (183 aa).

It belongs to the ATPase delta chain family. F-type ATPases have 2 components, F(1) - the catalytic core - and F(0) - the membrane proton channel. F(1) has five subunits: alpha(3), beta(3), gamma(1), delta(1), epsilon(1). F(0) has three main subunits: a(1), b(2) and c(10-14). The alpha and beta chains form an alternating ring which encloses part of the gamma chain. F(1) is attached to F(0) by a central stalk formed by the gamma and epsilon chains, while a peripheral stalk is formed by the delta and b chains.

The protein resides in the cell inner membrane. Its function is as follows. F(1)F(0) ATP synthase produces ATP from ADP in the presence of a proton or sodium gradient. F-type ATPases consist of two structural domains, F(1) containing the extramembraneous catalytic core and F(0) containing the membrane proton channel, linked together by a central stalk and a peripheral stalk. During catalysis, ATP synthesis in the catalytic domain of F(1) is coupled via a rotary mechanism of the central stalk subunits to proton translocation. This protein is part of the stalk that links CF(0) to CF(1). It either transmits conformational changes from CF(0) to CF(1) or is implicated in proton conduction. The sequence is that of ATP synthase subunit delta from Oleidesulfovibrio alaskensis (strain ATCC BAA-1058 / DSM 17464 / G20) (Desulfovibrio alaskensis).